Reading from the N-terminus, the 682-residue chain is DNA-directed RNA polymerase subunit beta' (682 aa).

Zn(2+) contacts are provided by Cys69, Cys71, Cys87, and Cys90. Residues Asp489, Asp491, and Asp493 each coordinate Mg(2+).

This sequence belongs to the RNA polymerase beta' chain family. RpoC1 subfamily. In terms of assembly, in plastids the minimal PEP RNA polymerase catalytic core is composed of four subunits: alpha, beta, beta', and beta''. When a (nuclear-encoded) sigma factor is associated with the core the holoenzyme is formed, which can initiate transcription. It depends on Mg(2+) as a cofactor. The cofactor is Zn(2+).

The protein resides in the plastid. It localises to the chloroplast. It catalyses the reaction RNA(n) + a ribonucleoside 5'-triphosphate = RNA(n+1) + diphosphate. Functionally, DNA-dependent RNA polymerase catalyzes the transcription of DNA into RNA using the four ribonucleoside triphosphates as substrates. In Acorus gramineus (Dwarf sweet flag), this protein is DNA-directed RNA polymerase subunit beta'.